Here is a 301-residue protein sequence, read N- to C-terminus: Probable alpha-L-glutamate ligase (301 aa).

Residues 104-287 (LQLLSRRGIG…VAGMIIGYLE (184 aa)) form the ATP-grasp domain. Residues K141, 178-179 (EY), D187, and 211-213 (RSN) each bind ATP. D248, E260, and N262 together coordinate Mg(2+). Mn(2+) contacts are provided by D248, E260, and N262.

It belongs to the RimK family. Mg(2+) is required as a cofactor. The cofactor is Mn(2+).

The protein is Probable alpha-L-glutamate ligase of Pseudomonas syringae pv. syringae (strain B728a).